The sequence spans 449 residues: uncharacterized protein (449 aa).

It localises to the mitochondrion. This is an uncharacterized protein from Podospora anserina (strain S / ATCC MYA-4624 / DSM 980 / FGSC 10383) (Pleurage anserina).